Consider the following 494-residue polypeptide: Putative glucuronosyltransferase PGSIP7 (494 aa).

A helical membrane pass occupies residues 4–24; the sequence is QRTLMFSCWVLSLLIIKTTAY. The Mn(2+) site is built by Asp-161 and Asp-163. Transmembrane regions (helical) follow at residues 316-336, 362-382, 389-409, 410-430, and 444-464; these read YSAE…IILV, AFKF…FFII, LIGW…PINA, FLLP…TLLV, and LSVF…FVKI.

It belongs to the glycosyltransferase 8 family. Glycogenin subfamily. Mn(2+) serves as cofactor.

It localises to the membrane. The sequence is that of Putative glucuronosyltransferase PGSIP7 (PGSIP7) from Arabidopsis thaliana (Mouse-ear cress).